A 192-amino-acid polypeptide reads, in one-letter code: Fe/S biogenesis protein NfuA (192 aa).

[4Fe-4S] cluster is bound by residues cysteine 149 and cysteine 152.

The protein belongs to the NfuA family. In terms of assembly, homodimer. Requires [4Fe-4S] cluster as cofactor.

In terms of biological role, involved in iron-sulfur cluster biogenesis. Binds a 4Fe-4S cluster, can transfer this cluster to apoproteins, and thereby intervenes in the maturation of Fe/S proteins. Could also act as a scaffold/chaperone for damaged Fe/S proteins. This Shewanella sp. (strain MR-7) protein is Fe/S biogenesis protein NfuA.